The primary structure comprises 4118 residues: BEACH domain-containing protein lvsB (4118 aa).

Residues Met-1 to Gln-35 form a disordered region. The helical transmembrane segment at Gly-198–Pro-218 threads the bilayer. The span at Asn-236–Asn-257 shows a compositional bias: low complexity. Disordered regions lie at residues Asn-236–Gln-267, Pro-332–Asn-382, and Ile-621–Asn-644. Positions Asn-258 to Gln-267 are enriched in basic residues. Low complexity-rich tracts occupy residues Pro-332–Asn-381 and Ile-621–Gly-636. The chain crosses the membrane as a helical span at residues Tyr-827–Pro-847. Residues Asn-1155 to Ser-1170 show a composition bias toward low complexity. Disordered regions lie at residues Asn-1155–Asn-1213, Ala-1599–Ser-1622, Asn-1643–Leu-1681, Gly-1928–Ser-1968, Ser-2015–Leu-2044, Arg-2537–Glu-2574, Phe-2702–Ser-2741, Asp-2754–Asn-2791, Asn-2902–Glu-3007, Pro-3245–Gln-3265, and Lys-3348–Lys-3418. Composition is skewed to low complexity over residues Ser-1657–Ser-1678 and Ser-1935–Ser-1968. Residues Ser-2540 to Asn-2571 are compositionally biased toward low complexity. A coiled-coil region spans residues Ser-2705–Thr-2738. Over residues Arg-2706–Thr-2734 the composition is skewed to basic and acidic residues. Composition is skewed to low complexity over residues Glu-2758 to Asn-2791 and Asn-2902 to Asn-2947. A compositionally biased stretch (polar residues) spans Gln-2948–Val-2962. Composition is skewed to low complexity over residues Ser-2963–Ser-2980 and Ser-2988–Asn-3006. One can recognise a BEACH-type PH domain in the interval Lys-3303–Met-3479. A compositionally biased stretch (low complexity) spans Ser-3357 to Asn-3411. A BEACH domain is found at Ala-3491–Lys-3782. WD repeat units follow at residues Val-3868 to Met-3907, Gly-3924 to Ser-3963, Thr-3984 to Gln-4027, Phe-4029 to Thr-4073, and Val-4075 to Ser-4114.

The protein resides in the membrane. It localises to the lysosome. It is found in the endosome. Functionally, involved in negative regulation of lysosome biogenesis, by limiting the heterotypic fusion of early endosomes and postlysosomal compartments. In Dictyostelium discoideum (Social amoeba), this protein is BEACH domain-containing protein lvsB (lvsB).